The following is a 307-amino-acid chain: 4-hydroxythreonine-4-phosphate dehydrogenase (307 aa).

Substrate is bound by residues histidine 126 and threonine 127. Residues histidine 156, histidine 195, and histidine 251 each coordinate a divalent metal cation. Substrate is bound by residues lysine 259, asparagine 268, and arginine 277.

Belongs to the PdxA family. In terms of assembly, homodimer. Zn(2+) serves as cofactor. Mg(2+) is required as a cofactor. It depends on Co(2+) as a cofactor.

It is found in the cytoplasm. It catalyses the reaction 4-(phosphooxy)-L-threonine + NAD(+) = 3-amino-2-oxopropyl phosphate + CO2 + NADH. The protein operates within cofactor biosynthesis; pyridoxine 5'-phosphate biosynthesis; pyridoxine 5'-phosphate from D-erythrose 4-phosphate: step 4/5. In terms of biological role, catalyzes the NAD(P)-dependent oxidation of 4-(phosphooxy)-L-threonine (HTP) into 2-amino-3-oxo-4-(phosphooxy)butyric acid which spontaneously decarboxylates to form 3-amino-2-oxopropyl phosphate (AHAP). The polypeptide is 4-hydroxythreonine-4-phosphate dehydrogenase (Helicobacter pylori (strain Shi470)).